A 434-amino-acid chain; its full sequence is Probable exopolygalacturonase A (434 aa).

Positions 1–19 (MKLPILVTLFITLPALCVS) are cleaved as a signal peptide. Residues Asn-46, Asn-57, Asn-106, Asn-199, and Asn-207 are each glycosylated (N-linked (GlcNAc...) asparagine). Residues 232–253 (SSNIVIQDSRIVNTDDCVSFKP) form a PbH1 1 repeat. Catalysis depends on Asp-246, which acts as the Proton donor. The cysteines at positions 248 and 265 are disulfide-linked. The N-linked (GlcNAc...) asparagine glycan is linked to Asn-254. A PbH1 2 repeat occupies 255–275 (STQIVIQNLDCTGSHGISVGS). His-269 is an active-site residue. Residues Asn-293, Asn-329, and Asn-354 are each glycosylated (N-linked (GlcNAc...) asparagine). Cys-392 and Cys-398 form a disulfide bridge. An N-linked (GlcNAc...) asparagine glycan is attached at Asn-400.

Belongs to the glycosyl hydrolase 28 family.

The protein resides in the secreted. It carries out the reaction [(1-&gt;4)-alpha-D-galacturonosyl](n) + H2O = alpha-D-galacturonate + [(1-&gt;4)-alpha-D-galacturonosyl](n-1). Specific in hydrolyzing the terminal glycosidic bond of polygalacturonic acid and oligogalacturonates. The polypeptide is Probable exopolygalacturonase A (pgxA) (Aspergillus niger (strain ATCC MYA-4892 / CBS 513.88 / FGSC A1513)).